Consider the following 347-residue polypeptide: DNA primase small subunit PriS (347 aa).

Residues Asp95 and Asp97 contribute to the active site. Residues Cys106, His108, Cys114, and Cys117 each coordinate Zn(2+). The Zinc knuckle motif motif lies at 106–117 (CNHEPGTVCPIC). The active site involves Asp280.

The protein belongs to the eukaryotic-type primase small subunit family. As to quaternary structure, heterodimer of a small subunit (PriS) and a large subunit (PriL). Both participate in formation of the active center, but the ATP-binding site is exclusively located on the small subunit. The cofactor is Mg(2+). It depends on Mn(2+) as a cofactor.

In terms of biological role, catalytic subunit of DNA primase, an RNA polymerase that catalyzes the synthesis of short RNA molecules used as primers for DNA polymerase during DNA replication. The small subunit contains the primase catalytic core and has DNA synthesis activity on its own. Binding to the large subunit stabilizes and modulates the activity, increasing the rate of DNA synthesis while decreasing the length of the DNA fragments, and conferring RNA synthesis capability. The DNA polymerase activity may enable DNA primase to also catalyze primer extension after primer synthesis. May also play a role in DNA repair. This Pyrococcus furiosus (strain ATCC 43587 / DSM 3638 / JCM 8422 / Vc1) protein is DNA primase small subunit PriS.